We begin with the raw amino-acid sequence, 480 residues long: Molybdate-anion transporter (480 aa).

12 helical membrane-spanning segments follow: residues 1–21 (MFVT…GLEL), 44–63 (ATFL…QGPY), 78–98 (IAIL…FSGW), 129–149 (FVLI…TTTF), 177–197 (TWNH…AEWL), 199–219 (LGPV…AWFV), 274–294 (VMLL…FIFL), 304–324 (SPLG…SLLF), 339–359 (VLCV…FSTV), 369–389 (FLAF…LNFL), 401–421 (SVLA…LLAL), and 441–461 (FGGC…LFTL).

It belongs to the major facilitator superfamily.

The protein localises to the cell membrane. Mediates high-affinity intracellular uptake of the rare oligo-element molybdenum. The polypeptide is Molybdate-anion transporter (mfsd5) (Takifugu rubripes (Japanese pufferfish)).